Consider the following 439-residue polypeptide: Xylose isomerase (439 aa).

Catalysis depends on residues His101 and Asp104. The Mg(2+) site is built by Glu232, Glu268, His271, Asp296, Asp307, Asp309, and Asp339.

The protein belongs to the xylose isomerase family. As to quaternary structure, homotetramer. Mg(2+) serves as cofactor.

The protein resides in the cytoplasm. It catalyses the reaction alpha-D-xylose = alpha-D-xylulofuranose. The protein is Xylose isomerase (xylA) of Lactococcus lactis subsp. lactis (strain IL1403) (Streptococcus lactis).